We begin with the raw amino-acid sequence, 192 residues long: UPF0312 protein YE1254 (192 aa).

An N-terminal signal peptide occupies residues 1–23 (MFNKTLLGLTVGALMFTAGSAVA).

The protein belongs to the UPF0312 family. Type 1 subfamily.

The protein resides in the periplasm. The polypeptide is UPF0312 protein YE1254 (Yersinia enterocolitica serotype O:8 / biotype 1B (strain NCTC 13174 / 8081)).